The primary structure comprises 580 residues: Tyrosyl-DNA phosphodiesterase 1 (580 aa).

Residues 65–117 (ATNKEQEAHSSSSKPAVTAPVASGSSSSGSLDTNPSGSSASGPAASQDTSNLA) are disordered. Over residues 87–110 (SGSSSSGSLDTNPSGSSASGPAAS) the composition is skewed to low complexity. His248 serves as the catalytic Nucleophile. Lys250 contacts substrate. The interaction with DNA stretch occupies residues 387–390 (SIGS). The active-site Proton donor/acceptor is the His479. Residue Lys481 participates in substrate binding.

Belongs to the tyrosyl-DNA phosphodiesterase family. Expressed in the body and at higher levels in the head. Expressed in the delaminating neuroblasts and a few ganglion mother cells in stage 11-14 embryonic central nervous system. Weak expression is seen in gonads at stage 16. Expressed in the brain; expression is regulated by DIP2.

It localises to the nucleus. The protein localises to the cytoplasm. DNA repair enzyme that can remove a variety of covalent adducts from DNA through hydrolysis of a 3'-phosphodiester bond, giving rise to DNA with a free 3' phosphate. Catalyzes the hydrolysis of dead-end complexes between DNA and the topoisomerase I active site tyrosine residue. Hydrolyzes 3'-phosphoglycolates on protruding 3' ends on DNA double-strand breaks due to DNA damage by radiation and free radicals. Acts on blunt-ended double-strand DNA breaks and on single-stranded DNA. May have low 3'exonuclease activity and may be able to remove a single nucleoside from the 3'end of DNA and RNA molecules with 3'hydroxyl groups. Has no exonuclease activity towards DNA or RNA with a 3'phosphate. Required for normal polarization of epidermal cells, correct subcellular location of the Crb complex to the apical lateral membrane, and for normal neuronal development during embryonic development. Contributes to maintenance of epithelial cells in response to topoisomerase-1-mediated and oxidative DNA damage. Required for precise axonal bifurcation in mushroom body neurons. Required for maintenance of normal neuronal function. This Drosophila melanogaster (Fruit fly) protein is Tyrosyl-DNA phosphodiesterase 1.